Reading from the N-terminus, the 136-residue chain is Large ribosomal subunit protein uL16 (136 aa).

The protein belongs to the universal ribosomal protein uL16 family. In terms of assembly, part of the 50S ribosomal subunit.

In terms of biological role, binds 23S rRNA and is also seen to make contacts with the A and possibly P site tRNAs. In Rickettsia africae (strain ESF-5), this protein is Large ribosomal subunit protein uL16.